We begin with the raw amino-acid sequence, 420 residues long: ATP phosphoribosyltransferase regulatory subunit (420 aa).

The protein belongs to the class-II aminoacyl-tRNA synthetase family. HisZ subfamily. In terms of assembly, heteromultimer composed of HisG and HisZ subunits.

The protein resides in the cytoplasm. The protein operates within amino-acid biosynthesis; L-histidine biosynthesis; L-histidine from 5-phospho-alpha-D-ribose 1-diphosphate: step 1/9. In terms of biological role, required for the first step of histidine biosynthesis. May allow the feedback regulation of ATP phosphoribosyltransferase activity by histidine. This chain is ATP phosphoribosyltransferase regulatory subunit, found in Bacillus cereus (strain ATCC 14579 / DSM 31 / CCUG 7414 / JCM 2152 / NBRC 15305 / NCIMB 9373 / NCTC 2599 / NRRL B-3711).